We begin with the raw amino-acid sequence, 164 residues long: Transcription antitermination protein NusB (164 aa).

It belongs to the NusB family.

Involved in transcription antitermination. Required for transcription of ribosomal RNA (rRNA) genes. Binds specifically to the boxA antiterminator sequence of the ribosomal RNA (rrn) operons. This Chlorobaculum parvum (strain DSM 263 / NCIMB 8327) (Chlorobium vibrioforme subsp. thiosulfatophilum) protein is Transcription antitermination protein NusB.